The chain runs to 141 residues: Small ribosomal subunit protein bS6 (141 aa).

Positions 110 to 141 (SRTKVSDQPAAVEAAEAPAAPAAQEESAPASA) are disordered. Residues 117–141 (QPAAVEAAEAPAAPAAQEESAPASA) show a composition bias toward low complexity.

This sequence belongs to the bacterial ribosomal protein bS6 family.

Its function is as follows. Binds together with bS18 to 16S ribosomal RNA. This Acidobacterium capsulatum (strain ATCC 51196 / DSM 11244 / BCRC 80197 / JCM 7670 / NBRC 15755 / NCIMB 13165 / 161) protein is Small ribosomal subunit protein bS6.